The primary structure comprises 775 residues: Transcription activator of gluconeogenesis HCBG_00867 (775 aa).

Residues 1-70 (MTASTQNGSP…NAKDPLRPRR (70 aa)) are disordered. 2 stretches are compositionally biased toward polar residues: residues 21–41 (NQES…QSPA) and 48–60 (TAES…STAA). The zn(2)-C6 fungal-type DNA-binding region spans 77 to 105 (CFACQRAHLTCGDERPCQRCIKRGLQDAC). Disordered stretches follow at residues 179-248 (TQAK…PFGA), 286-351 (GAGD…NIYN), 556-592 (NLNV…AGGG), and 649-725 (QGKE…SPKQ). Residues 195-217 (MQDTSINPSAFQAPSPTSTPNFD) are compositionally biased toward polar residues. Residues 218–229 (LSSNPPNRNLSS) show a composition bias toward low complexity. Composition is skewed to polar residues over residues 230–244 (AMTQ…QTQD), 292–323 (PSDS…TQSP), 334–351 (WNPS…NIYN), and 557–576 (LNVN…TPRN). A compositionally biased stretch (gly residues) spans 657–668 (GSDGKGGGGGGD). Low complexity predominate over residues 669–713 (VAATAATTSTSTSNGANSSGHANANRNNTNPKNSSPPSSSSAAAA).

This sequence belongs to the ERT1/acuK family.

Its subcellular location is the nucleus. Functionally, transcription factor which regulates nonfermentable carbon utilization. Activator of gluconeogenetic genes. The protein is Transcription activator of gluconeogenesis HCBG_00867 of Ajellomyces capsulatus (strain G186AR / H82 / ATCC MYA-2454 / RMSCC 2432) (Darling's disease fungus).